The sequence spans 466 residues: Glutamate--tRNA ligase (466 aa).

The 'HIGH' region motif lies at 10–20 (PSPTGYLHVGG). Zn(2+) contacts are provided by Cys-99, Cys-101, Cys-126, and His-128. The 'KMSKS' region signature appears at 237-241 (RLSKR). Lys-240 provides a ligand contact to ATP.

This sequence belongs to the class-I aminoacyl-tRNA synthetase family. Glutamate--tRNA ligase type 1 subfamily. In terms of assembly, monomer. Requires Zn(2+) as cofactor.

The protein localises to the cytoplasm. The catalysed reaction is tRNA(Glu) + L-glutamate + ATP = L-glutamyl-tRNA(Glu) + AMP + diphosphate. Its function is as follows. Catalyzes the attachment of glutamate to tRNA(Glu) in a two-step reaction: glutamate is first activated by ATP to form Glu-AMP and then transferred to the acceptor end of tRNA(Glu). The polypeptide is Glutamate--tRNA ligase (Trichlorobacter lovleyi (strain ATCC BAA-1151 / DSM 17278 / SZ) (Geobacter lovleyi)).